We begin with the raw amino-acid sequence, 617 residues long: V-type proton ATPase catalytic subunit A (617 aa).

ATP is bound at residue 250–257 (GAFGCGKT).

Belongs to the ATPase alpha/beta chains family. V-ATPase is a heteromultimeric enzyme made up of two complexes: the ATP-hydrolytic V1 complex and the proton translocation V0 complex. The V1 complex consists of three catalytic AB heterodimers that form a heterohexamer, three peripheral stalks each consisting of EG heterodimers, one central rotor including subunits D and F, and the regulatory subunits C and H. The proton translocation complex V0 consists of the proton transport subunit a, a ring of proteolipid subunits c9c'', rotary subunit d, subunits e and f, and the accessory subunits VhaAC45 and ATP6AP2.

The catalysed reaction is ATP + H2O + 4 H(+)(in) = ADP + phosphate + 5 H(+)(out). Its activity is regulated as follows. ATP hydrolysis occurs at the interface between the nucleotide-binding domains of subunits A and B. ATP hydrolysis triggers a conformational change in the subunits D and F, which induces a shift of subunit d. The c-ring is subsequently rotated and results in a continuous proton translocation across the membrane. Its function is as follows. Catalytic subunit of the V1 complex of vacuolar(H+)-ATPase (V-ATPase), a multisubunit enzyme composed of a peripheral complex (V1) that hydrolyzes ATP and a membrane integral complex (V0) that translocates protons. V-ATPase is responsible for acidifying and maintaining the pH of intracellular compartments and in some cell types, is targeted to the plasma membrane, where it is responsible for acidifying the extracellular environment. This is V-type proton ATPase catalytic subunit A (VHAA) from Manduca sexta (Tobacco hawkmoth).